The chain runs to 406 residues: CinA-like protein (406 aa).

Belongs to the CinA family.

This chain is CinA-like protein, found in Thermomicrobium roseum (strain ATCC 27502 / DSM 5159 / P-2).